Reading from the N-terminus, the 400-residue chain is Formate-dependent phosphoribosylglycinamide formyltransferase (400 aa).

Residues 22–23 and Glu-82 contribute to the N(1)-(5-phospho-beta-D-ribosyl)glycinamide site; that span reads EL. ATP-binding positions include Arg-115, Lys-157, 162-167, 197-200, and Glu-205; these read SSGKGQ and EGFV. The ATP-grasp domain occupies 120-315; that stretch reads RLAAETLGLP…EFELHARAIL (196 aa). Positions 274 and 286 each coordinate Mg(2+). N(1)-(5-phospho-beta-D-ribosyl)glycinamide-binding positions include Asp-293, Lys-362, and 369–370; that span reads RR.

The protein belongs to the PurK/PurT family. In terms of assembly, homodimer.

The catalysed reaction is N(1)-(5-phospho-beta-D-ribosyl)glycinamide + formate + ATP = N(2)-formyl-N(1)-(5-phospho-beta-D-ribosyl)glycinamide + ADP + phosphate + H(+). It functions in the pathway purine metabolism; IMP biosynthesis via de novo pathway; N(2)-formyl-N(1)-(5-phospho-D-ribosyl)glycinamide from N(1)-(5-phospho-D-ribosyl)glycinamide (formate route): step 1/1. Its function is as follows. Involved in the de novo purine biosynthesis. Catalyzes the transfer of formate to 5-phospho-ribosyl-glycinamide (GAR), producing 5-phospho-ribosyl-N-formylglycinamide (FGAR). Formate is provided by PurU via hydrolysis of 10-formyl-tetrahydrofolate. The chain is Formate-dependent phosphoribosylglycinamide formyltransferase from Mycolicibacterium vanbaalenii (strain DSM 7251 / JCM 13017 / BCRC 16820 / KCTC 9966 / NRRL B-24157 / PYR-1) (Mycobacterium vanbaalenii).